Consider the following 200-residue polypeptide: Holliday junction resolvase RecU (200 aa).

Mg(2+) contacts are provided by T85, D87, E100, and Q119.

Belongs to the RecU family. Mg(2+) is required as a cofactor.

It localises to the cytoplasm. The enzyme catalyses Endonucleolytic cleavage at a junction such as a reciprocal single-stranded crossover between two homologous DNA duplexes (Holliday junction).. In terms of biological role, endonuclease that resolves Holliday junction intermediates in genetic recombination. Cleaves mobile four-strand junctions by introducing symmetrical nicks in paired strands. Promotes annealing of linear ssDNA with homologous dsDNA. Required for DNA repair, homologous recombination and chromosome segregation. In Bacillus cytotoxicus (strain DSM 22905 / CIP 110041 / 391-98 / NVH 391-98), this protein is Holliday junction resolvase RecU.